The primary structure comprises 343 residues: Ribosomal RNA small subunit methyltransferase C (343 aa).

This sequence belongs to the methyltransferase superfamily. RsmC family. As to quaternary structure, monomer.

The protein localises to the cytoplasm. It carries out the reaction guanosine(1207) in 16S rRNA + S-adenosyl-L-methionine = N(2)-methylguanosine(1207) in 16S rRNA + S-adenosyl-L-homocysteine + H(+). Its function is as follows. Specifically methylates the guanine in position 1207 of 16S rRNA in the 30S particle. This is Ribosomal RNA small subunit methyltransferase C from Escherichia coli O157:H7.